Reading from the N-terminus, the 188-residue chain is Elongation factor P-like protein (188 aa).

It belongs to the elongation factor P family.

The protein is Elongation factor P-like protein of Vibrio campbellii (strain ATCC BAA-1116).